We begin with the raw amino-acid sequence, 391 residues long: Ferrochelatase (391 aa).

His196 and Glu281 together coordinate Fe cation.

It belongs to the ferrochelatase family.

Its subcellular location is the cytoplasm. It catalyses the reaction heme b + 2 H(+) = protoporphyrin IX + Fe(2+). The protein operates within porphyrin-containing compound metabolism; protoheme biosynthesis; protoheme from protoporphyrin-IX: step 1/1. In terms of biological role, catalyzes the ferrous insertion into protoporphyrin IX. In Parasynechococcus marenigrum (strain WH8102), this protein is Ferrochelatase.